We begin with the raw amino-acid sequence, 144 residues long: Ribosomally synthesized cyclic peptide phomopsin precursor phomA' (144 aa).

The first 18 residues, 1–18, serve as a signal peptide directing secretion; that stretch reads MRFTPAIVIAAFCSLAVA. 9 propeptides span residues 19-35, 42-50, 57-65, 72-79, 86-94, 101-108, 115-123, 130-137, and Lys144; these read APAAKAIARSPSEAVED, KKRGEAVED, and KRGEAVED.

PhomA' is processed by several endopeptidases including kexin proteases as well as the cluster-specific S41 family peptidase phomP1' and the peptidase phomG' to produce 5 identical copies of the hexapeptide Tyr-Val-Ile-Pro-Ile-Asp and 3 identical copies of Tyr-Val-Ile-Pro-Phe-Asp, that are further modified into phomapsins A and P, respectively. The timing and order of proteolysis of the phomA' precursor and PTMs are still unknown. Two tyrosinase-like enzyme phomQ1' and PhomQ2, catalyze the chlorination and hydroxylation of Tyr, respectively. PhomYb', is proposed to be involved in the construction of the macrocyclic structure. The other four ustYa family proteins may be involved in PTMs that generate the unique structure of phomopsin A. PhomYa' is required for the hydroxylation of C-beta of Tyr. PhomYc', PhomYd', and PhomYe' are responsible for the biosynthesis of 2,3-dehydroisoleucine (dIle), 2,3-dehydroaspartic acid (dAsp), and 3,4-dehydroproline (dPro), respectively. While dIle formation by phomYc is indispensable for the installation of dAsp by phomYd, the order of the other PTMs have not been elucidated yet. Most of the biosynthetic enzymes likely have broad substrate specificity, and thus, there might be a metabolic grid from a precursor to phomopsin A. The enzyme(s) responsible for the biosynthesis of 3,4-dehydrovaline (dVal) have also not been identified yet. Finally, PhomM' acts as an S-adenosylmethionine-dependent alpha-N-methyltransferase that catalyzes two successive N-methylation reactions, converting N-desmethyl-phomopsin A to phomopsin A and phomopsin A further to an N,N-dimethylated congener called phomopsin E.

It functions in the pathway mycotoxin biosynthesis. In terms of biological role, ribosomally synthesized cyclic peptide phomopsin precursor; part of the gene cluster that mediates the biosynthesis of the phomopsins, a group of hexapeptide mycotoxins which infects lupins and causes lupinosis disease in livestock. The phomA' translated product contains a 5-fold repeated peptide embedding the hexapeptide Tyr-Val-Ile-Pro-Ile-Asp and a 3-fold repeated peptide embedding the hexapeptide Tyr-Val-Ile-Pro-Phe-Asp, that is converted into phomapsin A and phomapsin P, respectively. After being excised from the precursor peptide by kexin proteases, the core peptides are cyclized and modified post-translationally by enzymes encoded within the corresponding gene cluster. The protein is Ribosomally synthesized cyclic peptide phomopsin precursor phomA' of Diaporthe leptostromiformis (Lupinosis disease fungus).